The primary structure comprises 122 residues: UPF0102 protein VCM66_0538 (122 aa).

This sequence belongs to the UPF0102 family.

The protein is UPF0102 protein VCM66_0538 of Vibrio cholerae serotype O1 (strain M66-2).